Reading from the N-terminus, the 268-residue chain is Tryptophan synthase alpha chain (268 aa).

Active-site proton acceptor residues include Glu49 and Asp60.

It belongs to the TrpA family. Tetramer of two alpha and two beta chains.

It carries out the reaction (1S,2R)-1-C-(indol-3-yl)glycerol 3-phosphate + L-serine = D-glyceraldehyde 3-phosphate + L-tryptophan + H2O. Its pathway is amino-acid biosynthesis; L-tryptophan biosynthesis; L-tryptophan from chorismate: step 5/5. Its function is as follows. The alpha subunit is responsible for the aldol cleavage of indoleglycerol phosphate to indole and glyceraldehyde 3-phosphate. The protein is Tryptophan synthase alpha chain of Vibrio metschnikovii.